Reading from the N-terminus, the 110-residue chain is Nucleotide-binding protein HI1146 homolog (110 aa).

It belongs to the RapZ-like family.

In terms of biological role, displays ATPase and GTPase activities. The polypeptide is Nucleotide-binding protein HI1146 homolog (Aggregatibacter actinomycetemcomitans (Actinobacillus actinomycetemcomitans)).